The primary structure comprises 493 residues: Serine/threonine-protein kinase PBL34 (493 aa).

Disordered stretches follow at residues 1–42 (MGLD…EEEE) and 84–117 (SKSA…TPVI). Gly2 carries N-myristoyl glycine lipidation. Positions 12–37 (WKSEKPKETENKNHKKKNGDDNKSRN) are enriched in basic and acidic residues. The segment covering 100–114 (SSTTTTSNAESSSST) has biased composition (low complexity). At Thr131 the chain carries Phosphothreonine. Residues 142–428 (FRPESLLGEG…VEALKPLPHL (287 aa)) enclose the Protein kinase domain. ATP-binding positions include 148 to 156 (LGEGGFGCV) and Lys180. At Tyr225 the chain carries Phosphotyrosine. The active-site Proton acceptor is the Asp275. Ser279 bears the Phosphoserine mark. Thr306 is modified (phosphothreonine). Ser309 bears the Phosphoserine mark. Thr310 and Thr315 each carry phosphothreonine. Tyr323 bears the Phosphotyrosine mark. Residues 447–493 (KNGSGRSQGFGSRNGQHQPVFRTLSSPHGSSPYRHQIPSPKPKGATT) form a disordered region. Polar residues predominate over residues 450–475 (SGRSQGFGSRNGQHQPVFRTLSSPHG).

It belongs to the protein kinase superfamily. Ser/Thr protein kinase family. Interacts with the Xanthomonas campestris effector XopAC/AvrAC. Interacts with SD129. Phosphorylated by SD129 at Thr-306 and Thr-310 in response to the pathogen-associated molecular pattern (PAMP) 3-OH-C10:0, a medium-chain 3-hydroxy fatty acid.

Its subcellular location is the cell membrane. The enzyme catalyses L-seryl-[protein] + ATP = O-phospho-L-seryl-[protein] + ADP + H(+). The catalysed reaction is L-threonyl-[protein] + ATP = O-phospho-L-threonyl-[protein] + ADP + H(+). In terms of biological role, involved in chitin-triggered immune signaling and is required for reactive oxygen species (ROS) production. Acts downstream of SD129 in defense signaling triggered by the pathogen-associated molecular pattern (PAMP) 3-OH-C10:0, a medium-chain 3-hydroxy fatty acid. In Arabidopsis thaliana (Mouse-ear cress), this protein is Serine/threonine-protein kinase PBL34.